We begin with the raw amino-acid sequence, 66 residues long: Putative inactive (E)-beta-ocimene synthase, chloroplastic (66 aa).

Residues 1 to 25 (MAAHNLCFNSAFVCNVHHQKTQHFP) constitute a chloroplast transit peptide.

It belongs to the terpene synthase family. Tpsb subfamily. As to expression, expressed exclusively in flowers.

Its subcellular location is the plastid. The protein localises to the chloroplast. The chain is Putative inactive (E)-beta-ocimene synthase, chloroplastic (TPS02) from Arabidopsis thaliana (Mouse-ear cress).